The sequence spans 267 residues: UPF0246 protein Dshi_3333 (267 aa).

This sequence belongs to the UPF0246 family.

This Dinoroseobacter shibae (strain DSM 16493 / NCIMB 14021 / DFL 12) protein is UPF0246 protein Dshi_3333.